Here is a 235-residue protein sequence, read N- to C-terminus: Small ribosomal subunit protein uS3 (235 aa).

A KH type-2 domain is found at Ile39–Arg107. The interval Gln215–Ala235 is disordered.

The protein belongs to the universal ribosomal protein uS3 family. In terms of assembly, part of the 30S ribosomal subunit. Forms a tight complex with proteins S10 and S14.

Functionally, binds the lower part of the 30S subunit head. Binds mRNA in the 70S ribosome, positioning it for translation. This chain is Small ribosomal subunit protein uS3, found in Rhodopseudomonas palustris (strain TIE-1).